The sequence spans 930 residues: Nonribosomal peptide synthetase acyN (930 aa).

The tract at residues 15–436 (LDPQDNKISV…AGRAKETIIV (422 aa)) is adenylation (A) domain. The Carrier domain occupies 567 to 646 (APSNETEATI…GLAGTLETLM (80 aa)). Position 604 is an O-(pantetheine 4'-phosphoryl)serine (serine 604). The thioesterase (TE) domain stretch occupies residues 665–914 (PLWLVHPGVG…HYTMLGPDNI (250 aa)).

This sequence belongs to the NRP synthetase family.

It catalyses the reaction 2 3-phenylpyruvate + 2 ATP = polyporic acid + 2 AMP + 2 diphosphate + H(+). Its pathway is secondary metabolite biosynthesis. Its activity is regulated as follows. Hydroxyphenylpyruvate acts more like a competitive inhibitor rather than a substrate. Nonribosomal peptide synthetase that mediates the biosynthesis of polyporic acid via the condensation of 2 phenylpyruvate units. Polyporic acid is further hydroxylaed by the cytochrome P450 monooxygenase MO6277 into less toxic ascocorynin. This is Nonribosomal peptide synthetase acyN from Ascocoryne sarcoides (Purple jellydisc fungus).